The following is a 424-amino-acid chain: MSDSKCDSQFYSVQVADSTFTVLKRYQQLKPIGSGAQGIVCAAFDTVLGINVAVKKLSRPFQNQTHAKRAYRELVLLKCVNHKNIISLLNVFTPQKTLEEFQDVYLVMELMDANLCQVIHMELDHERMSYLLYQMLCGIKHLHSAGIIHRDLKPSNIVVKSDCTLKILDFGLARTACTNFMMTPYVVTRYYRAPEVILGMGYKENVDIWSVGCIMGELVKGCVIFQGTDHIDQWNKVIEQLGTPSAEFMKKLQPTVRNYVENRPKYPGIKFEELFPDWIFPSESERDKIKTSQARDLLSKMLVIDPDKRISVDEALRHPYITVWYDPAEAEAPPPQIYDAQLEEREHAIEEWKELIYKEVMDWEERSKNGVVKDQPSDAAVSSNATPSQSSSINDISSMSTEQTLASDTDSSLDASTGPLEGCR.

The 296-residue stretch at 26–321 folds into the Protein kinase domain; the sequence is YQQLKPIGSG…VDEALRHPYI (296 aa). Residues 32–40 and Lys-55 each bind ATP; that span reads IGSGAQGIV. The active-site Proton acceptor is the Asp-151. Phosphothreonine; by MAP2K7 is present on Thr-183. A TXY motif is present at residues 183 to 185; it reads TPY. Tyr-185 bears the Phosphotyrosine; by MAP2K4 mark. The interval 368 to 424 is disordered; it reads KNGVVKDQPSDAAVSSNATPSQSSSINDISSMSTEQTLASDTDSSLDASTGPLEGCR. A compositionally biased stretch (low complexity) spans 388–417; sequence SQSSSINDISSMSTEQTLASDTDSSLDAST.

Belongs to the protein kinase superfamily. CMGC Ser/Thr protein kinase family. MAP kinase subfamily. As to quaternary structure, interacts with MECOM. Interacts with DCLK2. Binds to at least four scaffolding proteins, MAPK8IP1/JIP-1, MAPK8IP2/JIP-2, MAPK8IP3/JIP-3/JSAP1 and SPAG9/MAPK8IP4/JIP-4. These proteins also bind other components of the JNK signaling pathway. Interacts with NFATC4. Interacts with ATF7; the interaction does not phosphorylate ATF7 but acts as a docking site for ATF7-associated partners such as JUN. Interacts with BCL10. Interacts with CTNNB1 and GSK3B. Interacts with MAPKBP1. Interacts with POU5F1; phosphorylates POU5F1 at 'Ser-355'. Found in a complex with SH3RF1, RAC2, MAP3K7/TAK1, MAP2K7/MKK7, MAPK8IP1/JIP1 and MAPK8/JNK1. Mg(2+) is required as a cofactor. Post-translationally, dually phosphorylated on Thr-183 and Tyr-185 by MAP2K7 and MAP2K4, which activates the enzyme. Autophosphorylated in vitro.

It localises to the cytoplasm. The protein resides in the nucleus. The catalysed reaction is L-seryl-[protein] + ATP = O-phospho-L-seryl-[protein] + ADP + H(+). The enzyme catalyses L-threonyl-[protein] + ATP = O-phospho-L-threonyl-[protein] + ADP + H(+). Activated by threonine and tyrosine phosphorylation by either of two dual specificity kinases, MAP2K4 and MAP2K7. MAP2K4 shows a strong preference for Tyr-185 while MAP2K7 phosphorylates Tyr-183 preferentially. Inhibited by dual specificity phosphatases, such as DUSP1. Its function is as follows. Serine/threonine-protein kinase involved in various processes such as cell proliferation, differentiation, migration, transformation and programmed cell death. Extracellular stimuli such as pro-inflammatory cytokines or physical stress stimulate the stress-activated protein kinase/c-Jun N-terminal kinase (SAP/JNK) signaling pathway. In this cascade, two dual specificity kinases MAP2K4/MKK4 and MAP2K7/MKK7 phosphorylate and activate MAPK9/JNK2. In turn, MAPK9/JNK2 phosphorylates a number of transcription factors, primarily components of AP-1 such as JUN and ATF2 and thus regulates AP-1 transcriptional activity. In response to oxidative or ribotoxic stresses, inhibits rRNA synthesis by phosphorylating and inactivating the RNA polymerase 1-specific transcription initiation factor RRN3. Promotes stressed cell apoptosis by phosphorylating key regulatory factors including TP53 and YAP1. In T-cells, MAPK8 and MAPK9 are required for polarized differentiation of T-helper cells into Th1 cells. Upon T-cell receptor (TCR) stimulation, is activated by CARMA1, BCL10, MAP2K7 and MAP3K7/TAK1 to regulate JUN protein levels. Plays an important role in the osmotic stress-induced epithelial tight-junctions disruption. When activated, promotes beta-catenin/CTNNB1 degradation and inhibits the canonical Wnt signaling pathway. Also participates in neurite growth in spiral ganglion neurons. Phosphorylates the CLOCK-BMAL1 heterodimer and plays a role in the regulation of the circadian clock. Phosphorylates POU5F1, which results in the inhibition of POU5F1's transcriptional activity and enhances its proteasomal degradation. Phosphorylates ALKBH5 in response to reactive oxygen species (ROS), promoting ALKBH5 sumoylation and inactivation. In terms of biological role, MAPK9 isoforms display different binding patterns: alpha-1 and alpha-2 preferentially bind to JUN, whereas beta-1 and beta-2 bind to ATF2. However, there is no correlation between binding and phosphorylation, which is achieved at about the same efficiency by all isoforms. JUNB is not a substrate for JNK2 alpha-2, and JUND binds only weakly to it. The chain is Mitogen-activated protein kinase 9 (MAPK9) from Homo sapiens (Human).